The sequence spans 126 residues: uncharacterized protein (126 aa).

The disordered stretch occupies residues 1-27 (MSKSKTPNFDDMEVLDDTNDEYDDSES). Positions 10-27 (DDMEVLDDTNDEYDDSES) are enriched in acidic residues.

This is an uncharacterized protein from Halorubrum sp. PV6 (HRPV-1).